A 232-amino-acid chain; its full sequence is Response regulator MprA (232 aa).

One can recognise a Response regulatory domain in the interval 4-118 (RILVVDDDRA…ELLARMRALL (115 aa)). A 4-aspartylphosphate modification is found at aspartate 48. Positions 131–229 (SVAMTFSDLS…VRGVGYVLRE (99 aa)) form a DNA-binding region, ompR/PhoB-type.

Post-translationally, phosphorylated and dephosphorylated by MprB.

The protein resides in the cytoplasm. In terms of biological role, member of the two-component regulatory system MprB/MprA which contributes to maintaining a balance among several systems involved in stress resistance and is required for establishment and maintenance of persistent infection in the host. Functions as a transcriptional regulator that recognizes a 19-bp nucleotide motif comprizing two loosely conserved 8-bp direct DNA-binding motif repeats separated by a 3-bp spacer region. The chain is Response regulator MprA (mprA) from Mycobacterium ulcerans (strain Agy99).